The sequence spans 166 residues: MSFNFRIGQGYDVHAFGPGDHVMLGGVRVAHSHGVLAHSDGDVVLHALCDAMLGALALGDIGRHFPPSDARWKDADSAQFLQHCDGLLRERGWRVGNADITVICERPKVGPHAVAMRERIADLLAIELDAVSVKATTSEQLGFTGRGEGIAAQAAVLLGRIAAPHQ.

Residues Asp-12 and His-14 each contribute to the a divalent metal cation site. 4-CDP-2-C-methyl-D-erythritol 2-phosphate is bound by residues 12-14 and 38-39; these read DVH and HS. An a divalent metal cation-binding site is contributed by His-46. 4-CDP-2-C-methyl-D-erythritol 2-phosphate is bound by residues 60–62, 136–139, Phe-143, and Arg-146; these read DIG and TTSE.

Belongs to the IspF family. In terms of assembly, homotrimer. A divalent metal cation is required as a cofactor.

The enzyme catalyses 4-CDP-2-C-methyl-D-erythritol 2-phosphate = 2-C-methyl-D-erythritol 2,4-cyclic diphosphate + CMP. Its pathway is isoprenoid biosynthesis; isopentenyl diphosphate biosynthesis via DXP pathway; isopentenyl diphosphate from 1-deoxy-D-xylulose 5-phosphate: step 4/6. Involved in the biosynthesis of isopentenyl diphosphate (IPP) and dimethylallyl diphosphate (DMAPP), two major building blocks of isoprenoid compounds. Catalyzes the conversion of 4-diphosphocytidyl-2-C-methyl-D-erythritol 2-phosphate (CDP-ME2P) to 2-C-methyl-D-erythritol 2,4-cyclodiphosphate (ME-CPP) with a corresponding release of cytidine 5-monophosphate (CMP). The chain is 2-C-methyl-D-erythritol 2,4-cyclodiphosphate synthase from Xanthomonas axonopodis pv. citri (strain 306).